The sequence spans 132 residues: MAFDGTWKVDRNENYEKFMEKMGINVVKRKLAAHDNLKLIITQEGNKFTVKESSTFRSIEIIFELGVTFNYSLADGTELSGAWALEGDKLVGKFKRLDNGNALNTVREIIGGEMVQTYTYEGVEAKRIFKKE.

Ala-2 bears the N-acetylalanine mark. Residues Trp-83 and Arg-107 each contribute to the hexadecanoate site. Trp-83 and Arg-107 together coordinate tetradecanoate.

It belongs to the calycin superfamily. Fatty-acid binding protein (FABP) family.

It is found in the cytoplasm. FABPs are thought to play a role in the intracellular transport of long-chain fatty acids and their acyl-CoA esters. FABP2 is probably involved in triglyceride-rich lipoprotein synthesis. Binds saturated long-chain fatty acids with a high affinity, but binds with a lower affinity to unsaturated long-chain fatty acids. FABP2 may also help maintain energy homeostasis by functioning as a lipid sensor. The sequence is that of Fatty acid-binding protein, intestinal (FABP2) from Bos taurus (Bovine).